A 249-amino-acid chain; its full sequence is Coproheme decarboxylase (249 aa).

Fe-coproporphyrin III is bound by residues Arg-131, 145–149 (YPMNK), His-172, and Gln-185. Tyr-145 is an active-site residue.

Belongs to the ChdC family. Type 1 subfamily. Fe-coproporphyrin III is required as a cofactor.

The enzyme catalyses Fe-coproporphyrin III + 2 H2O2 + 2 H(+) = heme b + 2 CO2 + 4 H2O. It catalyses the reaction Fe-coproporphyrin III + H2O2 + H(+) = harderoheme III + CO2 + 2 H2O. The catalysed reaction is harderoheme III + H2O2 + H(+) = heme b + CO2 + 2 H2O. Its pathway is porphyrin-containing compound metabolism; protoheme biosynthesis. Functionally, involved in coproporphyrin-dependent heme b biosynthesis. Catalyzes the decarboxylation of Fe-coproporphyrin III (coproheme) to heme b (protoheme IX), the last step of the pathway. The reaction occurs in a stepwise manner with a three-propionate intermediate. This Staphylococcus carnosus (strain TM300) protein is Coproheme decarboxylase.